Reading from the N-terminus, the 94-residue chain is Pyrimidine/purine nucleoside phosphorylase (94 aa).

Belongs to the nucleoside phosphorylase PpnP family.

The catalysed reaction is a purine D-ribonucleoside + phosphate = a purine nucleobase + alpha-D-ribose 1-phosphate. It carries out the reaction adenosine + phosphate = alpha-D-ribose 1-phosphate + adenine. It catalyses the reaction cytidine + phosphate = cytosine + alpha-D-ribose 1-phosphate. The enzyme catalyses guanosine + phosphate = alpha-D-ribose 1-phosphate + guanine. The catalysed reaction is inosine + phosphate = alpha-D-ribose 1-phosphate + hypoxanthine. It carries out the reaction thymidine + phosphate = 2-deoxy-alpha-D-ribose 1-phosphate + thymine. It catalyses the reaction uridine + phosphate = alpha-D-ribose 1-phosphate + uracil. The enzyme catalyses xanthosine + phosphate = alpha-D-ribose 1-phosphate + xanthine. Functionally, catalyzes the phosphorolysis of diverse nucleosides, yielding D-ribose 1-phosphate and the respective free bases. Can use uridine, adenosine, guanosine, cytidine, thymidine, inosine and xanthosine as substrates. Also catalyzes the reverse reactions. The sequence is that of Pyrimidine/purine nucleoside phosphorylase from Salmonella heidelberg (strain SL476).